Here is a 607-residue protein sequence, read N- to C-terminus: Polypeptide N-acetylgalactosaminyltransferase 18 (607 aa).

Topologically, residues 1–12 (MVCTRKTKTLVS) are cytoplasmic. Residues 13 to 35 (TCVILSGMTNIICLLYVGWVTNY) traverse the membrane as a helical; Signal-anchor for type II membrane protein segment. Residues 36-607 (IASVYVRGQE…ITNVLRSLAS (572 aa)) are Lumenal-facing. 5 disulfide bridges follow: cysteine 144–cysteine 377, cysteine 368–cysteine 447, cysteine 482–cysteine 498, cysteine 530–cysteine 543, and cysteine 571–cysteine 591. N-linked (GlcNAc...) asparagine glycosylation is present at asparagine 146. A catalytic subdomain A region spans residues 153–267 (LPEVSIVFIF…VGWAEPVLTR (115 aa)). Aspartate 194 is a binding site for substrate. Residue asparagine 195 is glycosylated (N-linked (GlcNAc...) asparagine). Aspartate 251 and histidine 253 together coordinate Mn(2+). Asparagine 320 carries an N-linked (GlcNAc...) asparagine glycan. The tract at residues 324–385 (PIRSPALIGC…PCSRIAHIER (62 aa)) is catalytic subdomain B. Residue histidine 382 coordinates Mn(2+). Substrate-binding residues include arginine 385 and tyrosine 390. The region spanning 469 to 599 (AYGVLQNSLK…KCSGQHWSIT (131 aa)) is the Ricin B-type lectin domain.

The protein belongs to the glycosyltransferase 2 family. GalNAc-T subfamily. Mn(2+) serves as cofactor.

The protein localises to the golgi apparatus membrane. It catalyses the reaction L-seryl-[protein] + UDP-N-acetyl-alpha-D-galactosamine = a 3-O-[N-acetyl-alpha-D-galactosaminyl]-L-seryl-[protein] + UDP + H(+). It carries out the reaction L-threonyl-[protein] + UDP-N-acetyl-alpha-D-galactosamine = a 3-O-[N-acetyl-alpha-D-galactosaminyl]-L-threonyl-[protein] + UDP + H(+). The protein operates within protein modification; protein glycosylation. Functionally, catalyzes the initial reaction in O-linked oligosaccharide biosynthesis, the transfer of an N-acetyl-D-galactosamine (GalNAc) residue from UDP-GalNAc to a serine or threonine residue on the protein receptor. The sequence is that of Polypeptide N-acetylgalactosaminyltransferase 18 (GALNT18) from Homo sapiens (Human).